The following is a 109-amino-acid chain: Nucleoid-associated protein SG0690 (109 aa).

The tract at residues 1–23 (MFGKGGMGNLMKQAQQMQEKMQR) is disordered.

Belongs to the YbaB/EbfC family. Homodimer.

It is found in the cytoplasm. It localises to the nucleoid. Binds to DNA and alters its conformation. May be involved in regulation of gene expression, nucleoid organization and DNA protection. This chain is Nucleoid-associated protein SG0690, found in Sodalis glossinidius (strain morsitans).